Reading from the N-terminus, the 529-residue chain is Tyrosine-protein kinase Fgr (529 aa).

G2 carries N-myristoyl glycine lipidation. S-palmitoyl cysteine attachment occurs at residues C3 and C6. A Phosphotyrosine modification is found at Y34. The SH3 domain occupies 77–138; the sequence is IGVTLFIALY…PSNYVAPVDS (62 aa). The SH2 domain maps to 144 to 241; sequence WYFGKIGRKD…GLCNLLIAPC (98 aa). Y208 bears the Phosphotyrosine mark. A Phosphoserine modification is found at S218. A Protein kinase domain is found at 263 to 516; the sequence is ITLERRLGTG…YLQSFLEDYF (254 aa). Residues 269–277 and K291 contribute to the ATP site; that span reads LGTGCFGDV. D382 functions as the Proton acceptor in the catalytic mechanism. The residue at position 412 (Y412) is a Phosphotyrosine. Y523 bears the Phosphotyrosine; by SRC mark.

It belongs to the protein kinase superfamily. Tyr protein kinase family. SRC subfamily. As to quaternary structure, interacts with ITGB1, ITGB2, MS4A2/FCER1B, FCER1G, FCGR2A and/or FCGR2B. Interacts (via SH2 domain) with SYK (tyrosine phosphorylated). Interacts (via SH2 domain) with FLT3 (tyrosine phosphorylated). Interacts with PTK2/FAK1. Interacts (via SH2 domain) with HCLS1 (tyrosine phosphorylated by SYK). Interacts with SIRPA and PTPNS1. Interacts (not phosphorylated on tyrosine residues) with CBL; FGR tyrosine phosphorylation promotes dissociation. Interacts with PIK3R1 and FASLG. Interacts with CLNK. Ubiquitinated. Becomes ubiquitinated in response to ITGB2 signaling; this does not lead to degradation. In terms of processing, phosphorylated. Autophosphorylated on tyrosine residues. Becomes phosphorylated in response to FCGR2A and/or FCGR2B engagement, cell adhesion and signaling by ITGB2. Prior phosphorylation at Tyr-523 by SRC inhibits ulterior autophosphorylation at Tyr-412. As to expression, detected in neutrophils, monocytes and natural killer cells (at protein level). Detected in monocytes and large lymphocytes.

It is found in the cell membrane. It localises to the cell projection. The protein localises to the ruffle membrane. Its subcellular location is the cytoplasm. The protein resides in the cytosol. It is found in the cytoskeleton. It localises to the mitochondrion inner membrane. The protein localises to the mitochondrion intermembrane space. The catalysed reaction is L-tyrosyl-[protein] + ATP = O-phospho-L-tyrosyl-[protein] + ADP + H(+). With respect to regulation, activated by autophosphorylation. Prior phosphorylation at Tyr-523 by SRC inhibits ulterior autophosphorylation at Tyr-412. Activated by phorbol myristate acetate, phosphatidic acid and poly-Lys. Binding (via SH2 domain) of HCLS1 that is already phosphorylated by SYK strongly increases kinase activity. Functionally, non-receptor tyrosine-protein kinase that transmits signals from cell surface receptors devoid of kinase activity and contributes to the regulation of immune responses, including neutrophil, monocyte, macrophage and mast cell functions, cytoskeleton remodeling in response to extracellular stimuli, phagocytosis, cell adhesion and migration. Promotes mast cell degranulation, release of inflammatory cytokines and IgE-mediated anaphylaxis. Acts downstream of receptors that bind the Fc region of immunoglobulins, such as MS4A2/FCER1B, FCGR2A and/or FCGR2B. Acts downstream of ITGB1 and ITGB2, and regulates actin cytoskeleton reorganization, cell spreading and adhesion. Depending on the context, activates or inhibits cellular responses. Functions as a negative regulator of ITGB2 signaling, phagocytosis and SYK activity in monocytes. Required for normal ITGB1 and ITGB2 signaling, normal cell spreading and adhesion in neutrophils and macrophages. Functions as a positive regulator of cell migration and regulates cytoskeleton reorganization via RAC1 activation. Phosphorylates SYK (in vitro) and promotes SYK-dependent activation of AKT1 and MAP kinase signaling. Phosphorylates PLD2 in antigen-stimulated mast cells, leading to PLD2 activation and the production of the signaling molecules lysophosphatidic acid and diacylglycerol. Promotes activation of PIK3R1. Phosphorylates FASLG, and thereby regulates its ubiquitination and subsequent internalization. Phosphorylates ABL1. Promotes phosphorylation of CBL, CTTN, PIK3R1, PTK2/FAK1, PTK2B/PYK2 and VAV2. Phosphorylates HCLS1 that has already been phosphorylated by SYK, but not unphosphorylated HCLS1. Together with CLNK, it acts as a negative regulator of natural killer cell-activating receptors and inhibits interferon-gamma production. The protein is Tyrosine-protein kinase Fgr (FGR) of Homo sapiens (Human).